The chain runs to 360 residues: Phospho-N-acetylmuramoyl-pentapeptide-transferase (360 aa).

At M1–R25 the chain is on the periplasmic side. The helical transmembrane segment at A26 to A46 threads the bilayer. The Cytoplasmic segment spans residues R47–T71. The helical transmembrane segment at P72–Y92 threads the bilayer. A topological domain (periplasmic) is located at residue P93. The helical transmembrane segment at S94 to V114 threads the bilayer. Topologically, residues D115 to R131 are cytoplasmic. The chain crosses the membrane as a helical span at residues W132–G152. At K153–D167 the chain is on the periplasmic side. Residues V168 to G188 traverse the membrane as a helical segment. Residues N189–D198 lie on the Cytoplasmic side of the membrane. A helical transmembrane segment spans residues G199–T219. Topologically, residues G220–H235 are periplasmic. Residues A236–F256 form a helical membrane-spanning segment. Residues N257 to Q262 are Cytoplasmic-facing. Residues V263–L283 form a helical membrane-spanning segment. At L284–E287 the chain is on the periplasmic side. Residues F288–V308 traverse the membrane as a helical segment. The Cytoplasmic segment spans residues G309 to R337. The chain crosses the membrane as a helical span at residues V338–K358. Residues V359–R360 are Periplasmic-facing.

It belongs to the glycosyltransferase 4 family. MraY subfamily. Mg(2+) is required as a cofactor.

It localises to the cell inner membrane. It catalyses the reaction UDP-N-acetyl-alpha-D-muramoyl-L-alanyl-gamma-D-glutamyl-meso-2,6-diaminopimeloyl-D-alanyl-D-alanine + di-trans,octa-cis-undecaprenyl phosphate = di-trans,octa-cis-undecaprenyl diphospho-N-acetyl-alpha-D-muramoyl-L-alanyl-D-glutamyl-meso-2,6-diaminopimeloyl-D-alanyl-D-alanine + UMP. It functions in the pathway cell wall biogenesis; peptidoglycan biosynthesis. Functionally, catalyzes the initial step of the lipid cycle reactions in the biosynthesis of the cell wall peptidoglycan: transfers peptidoglycan precursor phospho-MurNAc-pentapeptide from UDP-MurNAc-pentapeptide onto the lipid carrier undecaprenyl phosphate, yielding undecaprenyl-pyrophosphoryl-MurNAc-pentapeptide, known as lipid I. The protein is Phospho-N-acetylmuramoyl-pentapeptide-transferase of Salmonella agona (strain SL483).